The chain runs to 239 residues: NADH-quinone oxidoreductase chain 2 (239 aa).

Positions 96, 101, 137, and 141 each coordinate [2Fe-2S] cluster.

The protein belongs to the complex I 24 kDa subunit family. NDH-1 is composed of at least 14 different subunits, Nqo1 to Nqo14. The complex has a L-shaped structure, with the hydrophobic arm (subunits Nqo7, Nqo8, Nqo10 to Nqo14) embedded in the inner membrane and the hydrophilic peripheral arm (subunits Nqo1 to Nqo6, Nqo9) protruding into the bacterial cytoplasm. The hydrophilic domain contains all the redox centers. [2Fe-2S] cluster serves as cofactor.

It is found in the cell inner membrane. It carries out the reaction a quinone + NADH + 5 H(+)(in) = a quinol + NAD(+) + 4 H(+)(out). NDH-1 shuttles electrons from NADH, via FMN and iron-sulfur (Fe-S) centers, to quinones in the respiratory chain. The immediate electron acceptor for the enzyme in this species is believed to be ubiquinone. Couples the redox reaction to proton translocation (for every two electrons transferred, four hydrogen ions are translocated across the cytoplasmic membrane), and thus conserves the redox energy in a proton gradient. The chain is NADH-quinone oxidoreductase chain 2 (nqo2) from Paracoccus denitrificans.